A 424-amino-acid chain; its full sequence is GTPase Obg (424 aa).

Residues 1–158 (MFVDKARIFV…RWISLELKLL (158 aa)) enclose the Obg domain. Residues 159–331 (ADVGLIGFPN…LLKECARVLS (173 aa)) form the OBG-type G domain. GTP-binding positions include 165 to 172 (GFPNVGKS), 190 to 194 (FTTIT), 212 to 215 (DIPG), 282 to 285 (NKAD), and 312 to 314 (SAA). Mg(2+) contacts are provided by S172 and T192. The OCT domain occupies 345–424 (RFVPEDKHFT…LNDFEFEFLK (80 aa)).

Belongs to the TRAFAC class OBG-HflX-like GTPase superfamily. OBG GTPase family. Monomer. Mg(2+) is required as a cofactor.

It localises to the cytoplasm. Functionally, an essential GTPase which binds GTP, GDP and possibly (p)ppGpp with moderate affinity, with high nucleotide exchange rates and a fairly low GTP hydrolysis rate. Plays a role in control of the cell cycle, stress response, ribosome biogenesis and in those bacteria that undergo differentiation, in morphogenesis control. This Clostridium acetobutylicum (strain ATCC 824 / DSM 792 / JCM 1419 / IAM 19013 / LMG 5710 / NBRC 13948 / NRRL B-527 / VKM B-1787 / 2291 / W) protein is GTPase Obg.